A 1128-amino-acid chain; its full sequence is Cordon-bleu protein-like 1 (1128 aa).

The interval 1-35 (MDGRTPRPQDAPARRKPKAKAPLPPAETKYTDVSS) is disordered. At threonine 139 the chain carries Phosphothreonine. A phosphoserine mark is found at serine 204, serine 222, and serine 256. Disordered regions lie at residues 249-309 (KKRD…VPQD), 325-441 (MSVD…SPKS), and 454-499 (TLKN…TSNG). Threonine 260 is modified (phosphothreonine). A compositionally biased stretch (polar residues) spans 270–286 (FTRSNTISKPYISNTLP). Serine 273 is modified (phosphoserine). Phosphothreonine is present on threonine 284. A KKRRAP 1 motif is present at residues 291-296 (KKRRAP). A phosphoserine mark is found at serine 326, serine 333, serine 344, and serine 356. Positions 345–357 (LQLSSMSAGNSSL) are enriched in polar residues. The short motif at 360-365 (TKRKAP) is the KKRRAP 2 element. The span at 397–415 (SEANSPEELSSPAGISSDY) shows a compositional bias: polar residues. The segment covering 416 to 425 (SLEEIDEKEE) has biased composition (acidic residues). Phosphoserine is present on residues serine 438, serine 441, serine 461, serine 471, and serine 474. The segment covering 475–488 (MEEKQETKSTDGQE) has biased composition (basic and acidic residues). Residues serine 563, serine 584, serine 786, serine 813, serine 814, and serine 821 each carry the phosphoserine modification. Disordered stretches follow at residues 780 to 840 (TEDS…PFAP), 882 to 964 (SAAA…SQVS), 995 to 1081 (RSQS…PEQM), and 1103 to 1128 (IPSN…QDGH). Basic and acidic residues predominate over residues 899–908 (LTNKEAERDM). 5 positions are modified to phosphoserine: serine 911, serine 917, serine 947, serine 1069, and serine 1070. 2 stretches are compositionally biased toward polar residues: residues 1045-1081 (SAHN…PEQM) and 1103-1122 (IPSN…SMSP). One can recognise a WH2 domain in the interval 1081-1101 (MRQSLLTAIRSGEAAAKLKRV). Serine 1121 is subject to Phosphoserine.

This chain is Cordon-bleu protein-like 1, found in Homo sapiens (Human).